The following is a 170-amino-acid chain: Shikimate kinase (170 aa).

Residue 11–16 (LSGKST) participates in ATP binding. Serine 15 lines the Mg(2+) pocket. Substrate contacts are provided by aspartate 33, arginine 57, and glycine 79. An ATP-binding site is contributed by arginine 119. Position 137 (arginine 137) interacts with substrate.

The protein belongs to the shikimate kinase family. In terms of assembly, monomer. It depends on Mg(2+) as a cofactor.

It localises to the cytoplasm. It carries out the reaction shikimate + ATP = 3-phosphoshikimate + ADP + H(+). It functions in the pathway metabolic intermediate biosynthesis; chorismate biosynthesis; chorismate from D-erythrose 4-phosphate and phosphoenolpyruvate: step 5/7. In terms of biological role, catalyzes the specific phosphorylation of the 3-hydroxyl group of shikimic acid using ATP as a cosubstrate. This chain is Shikimate kinase, found in Clostridium botulinum (strain Kyoto / Type A2).